The sequence spans 418 residues: MAERFVVTGGNRLSGEVAVGGAKNSVLKLMAATLLAEGTSTITNCPDILDVPLMAEVLRGLGATVELDGDVARITAPDEPKYDADFAAVRQFRASVCVLGPLVGRCKRARVALPGGDAIGSRPLDMHQAGLRQLGAHCNIEHGCVVARAETLRGAEIQLEFPSVGATENILMAAVVAEGVTTIHNAAREPDVVDLCTMLNQMGAQVEGAGSPTMTITGVPRLHPTEHRVIGDRIVAATWGIAAAMTRGDISVAGVDPAHLQLVLHKLHDAGATVTQTDASFRVTQYERPKAVNVATLPFPGFPTDLQPMAIALASIADGTSMITENVFEARFRFVEEMIRLGADARTDGHHAVVRGLPQLSSAPVWCSDIRAGAGLVLAGLVADGDTEVHDVFHIDRGYPLFVENLVSLGAEIERVCC.

23–24 (KN) provides a ligand contact to phosphoenolpyruvate. R93 serves as a coordination point for UDP-N-acetyl-alpha-D-glucosamine. D117 functions as the Proton donor in the catalytic mechanism. UDP-N-acetyl-alpha-D-glucosamine contacts are provided by D305 and V327.

Belongs to the EPSP synthase family. MurA subfamily.

It localises to the cytoplasm. The catalysed reaction is phosphoenolpyruvate + UDP-N-acetyl-alpha-D-glucosamine = UDP-N-acetyl-3-O-(1-carboxyvinyl)-alpha-D-glucosamine + phosphate. It functions in the pathway cell wall biogenesis; peptidoglycan biosynthesis. Cell wall formation. Adds enolpyruvyl to UDP-N-acetylglucosamine. The chain is UDP-N-acetylglucosamine 1-carboxyvinyltransferase from Mycobacterium bovis (strain ATCC BAA-935 / AF2122/97).